The primary structure comprises 170 residues: Anaphase-promoting complex subunit SWM1 (170 aa).

Basic and acidic residues-rich tracts occupy residues 48 to 67 and 132 to 141; these read NTRT…RNSN and GANEPRKETI. 2 disordered regions span residues 48–81 and 122–141; these read NTRT…MTSE and LNGG…KETI.

It belongs to the APC13 family. In terms of assembly, the APC/C is composed of at least 13 subunits that stay tightly associated throughout the cell cycle: APC1, APC2, APC4, APC5, APC9, APC11, CDC16, CDC23, CDC26, CDC27, DOC1, MND2 and SWM1. SWM1 interacts directly with CDC23 and APC5, and is required to tether APC9, CDC16, CDC26 and CDC27 to the complex.

It participates in protein modification; protein ubiquitination. Functionally, component of the anaphase promoting complex/cyclosome (APC/C), a cell cycle-regulated E3 ubiquitin-protein ligase complex that controls progression through mitosis and the G1 phase of the cell cycle. The APC/C is thought to confer substrate specificity and, in the presence of ubiquitin-conjugating E2 enzymes, it catalyzes the formation of protein-ubiquitin conjugates that are subsequently degraded by the 26S proteasome. In early mitosis, the APC/C is activated by CDC20 and targets securin PDS1, the B-type cyclin CLB5, and other anaphase inhibitory proteins for proteolysis, thereby triggering the separation of sister chromatids at the metaphase-to-anaphase transition. In late mitosis and in G1, degradation of CLB5 allows activation of the APC/C by CDH1, which is needed to destroy CDC20 and the B-type cyclin CLB2 to allow exit from mitosis and creating the low CDK state necessary for cytokinesis and for reforming prereplicative complexes in G1 prior to another round of replication. SWM1 is required for APC/C activity in meiosis. In Saccharomyces cerevisiae (strain ATCC 204508 / S288c) (Baker's yeast), this protein is Anaphase-promoting complex subunit SWM1 (SWM1).